The chain runs to 356 residues: Outer spore wall protein LDS2 (356 aa).

Residues 1–92 (MSTRPQPDWY…ISESVGNSDY (92 aa)) lie on the Cytoplasmic side of the membrane. The chain crosses the membrane as a helical span at residues 93–113 (LHLFFLIFGYYLLNLLLIVAF). The Extracellular portion of the chain corresponds to 114 to 115 (TS). A helical membrane pass occupies residues 116–136 (ILAWSLLVCIYLPFLGLFALP). Residues 137-213 (LAYMQTILIS…KRFYLVSLPQ (77 aa)) are Cytoplasmic-facing. Residues 214–234 (FFIFFFWYIFIAFMFLLLLLV) form a helical membrane-spanning segment. Residues 235–294 (PIVGPITINMLPFSPGMGFYYFEPYFVDVLHLDSRKLSKVYYKGFAKWLLYSISSGLLES) are Extracellular-facing. The chain crosses the membrane as a helical span at residues 295–315 (IPILGGLFIGTNAVGASLWIV). Residues 316 to 356 (KEIKDRDQPAVPPSPPAEPEEPTVGSYAPPIQQSIAHINPP) lie on the Cytoplasmic side of the membrane. Residues 322-356 (DQPAVPPSPPAEPEEPTVGSYAPPIQQSIAHINPP) are disordered. Residues 346–356 (IQQSIAHINPP) are compositionally biased toward polar residues.

The protein belongs to the LDS family.

Its subcellular location is the prospore membrane. It is found in the lipid droplet. It localises to the spore wall. Involved in spore wall assembly. The sequence is that of Outer spore wall protein LDS2 from Saccharomyces cerevisiae (strain ATCC 204508 / S288c) (Baker's yeast).